The sequence spans 318 residues: Pyrroline-5-carboxylate reductase ucsG (318 aa).

It belongs to the pyrroline-5-carboxylate reductase family.

The protein operates within mycotoxin biosynthesis. Its function is as follows. Pyrroline-5-carboxylate reductase; part of the gene cluster that mediates the biosynthesis of UCS1025A, a member of the pyrrolizidinone family that acts as a strong telomerase inhibitor and displays potent antibacterial and antitumor properties. These compounds share a hemiaminal-containing pyrrolizidinone core fused with a gamma-lactone, giving a furopyrrolizidine that is connected to a decalin fragment. The polyketide synthase module (PKS) of the PKS-NRPS ucsA is responsible for the synthesis of the polyketide backbone via the condensation of an acetyl-CoA starter unit with 6 malonyl-CoA units. The downstream nonribosomal peptide synthetase (NRPS) module then amidates the carboxyl end of the polyketide with a 2S,3S-methylproline derived from L-isoleucine by the 2-oxoglutarate-dependent dioxygenase ucsF which converts L-isoleucine to (4S,5S)-4-methylpyrroline-5-carboxylate that is further converted to 2S,3S-methylproline by the pyrroline-5-carboxylate reductase ucsG. Reductive release of the completed aminoacyl polyketide from the assembly line can form the 3-pyrrolin-2-one structure via an intramolecular Knoevenagel reaction. Because ucsA lacks a designated enoylreductase (ER) domain, the required activity is provided the enoyl reductase ucsL. This keto acyclic precursor is the substrate of the Diels-Alderase ucsH, that catalyzes the Diels-Alder cycloaddition. Oxidation of the 3S-methyl group to a carboxylate by the cytochrome P450 monooxygenase ucsK allows an oxa-Michael cyclization that might involve the reductase/dehydrogenase ucsI and which furnishes the furopyrrolizidine. The oxidase ucsJ likely plays a critical role in stereoselective reduction of the C5-C6 double bond to afford the required R-configured carboxylate group. Further enolization and oxidation at C5 by an unidentified enzyme affords the last intermediate that can undergo oxa-Michael cyclization to yield UCS1025A. This is Pyrroline-5-carboxylate reductase ucsG from Acremonium sp.